The sequence spans 193 residues: ATP-dependent Clp protease proteolytic subunit 1 (193 aa).

Catalysis depends on S99, which acts as the Nucleophile. H124 is an active-site residue.

Belongs to the peptidase S14 family. As to quaternary structure, fourteen ClpP subunits assemble into 2 heptameric rings which stack back to back to give a disk-like structure with a central cavity, resembling the structure of eukaryotic proteasomes.

It localises to the cytoplasm. The enzyme catalyses Hydrolysis of proteins to small peptides in the presence of ATP and magnesium. alpha-casein is the usual test substrate. In the absence of ATP, only oligopeptides shorter than five residues are hydrolyzed (such as succinyl-Leu-Tyr-|-NHMec, and Leu-Tyr-Leu-|-Tyr-Trp, in which cleavage of the -Tyr-|-Leu- and -Tyr-|-Trp bonds also occurs).. In terms of biological role, cleaves peptides in various proteins in a process that requires ATP hydrolysis. Has a chymotrypsin-like activity. Plays a major role in the degradation of misfolded proteins. The protein is ATP-dependent Clp protease proteolytic subunit 1 of Shouchella clausii (strain KSM-K16) (Alkalihalobacillus clausii).